Reading from the N-terminus, the 158-residue chain is Transcription elongation factor GreA (158 aa).

The stretch at 47-73 (AEYHAAREKQSFIEGRIQELQAKLARA) forms a coiled coil.

Belongs to the GreA/GreB family.

Necessary for efficient RNA polymerase transcription elongation past template-encoded arresting sites. The arresting sites in DNA have the property of trapping a certain fraction of elongating RNA polymerases that pass through, resulting in locked ternary complexes. Cleavage of the nascent transcript by cleavage factors such as GreA or GreB allows the resumption of elongation from the new 3'terminus. GreA releases sequences of 2 to 3 nucleotides. This Thermodesulfovibrio yellowstonii (strain ATCC 51303 / DSM 11347 / YP87) protein is Transcription elongation factor GreA.